An 82-amino-acid chain; its full sequence is Small ribosomal subunit protein bS16 (82 aa).

It belongs to the bacterial ribosomal protein bS16 family.

The sequence is that of Small ribosomal subunit protein bS16 from Sodalis glossinidius (strain morsitans).